Here is a 246-residue protein sequence, read N- to C-terminus: Ribosome maturation factor RimM (246 aa).

Residues 1 to 15 (MKRKQESKGAGEKRQ) show a composition bias toward basic and acidic residues. Positions 1-63 (MKRKQESKGA…NPQFTTPNPD (63 aa)) are disordered. Residues 45–54 (VPSPQSPIPN) are compositionally biased toward pro residues. The region spanning 158–239 (GEDEYHVVDL…RIEITPPPGL (82 aa)) is the PRC barrel domain.

Belongs to the RimM family. In terms of assembly, binds ribosomal protein uS19.

It is found in the cytoplasm. In terms of biological role, an accessory protein needed during the final step in the assembly of 30S ribosomal subunit, possibly for assembly of the head region. Essential for efficient processing of 16S rRNA. May be needed both before and after RbfA during the maturation of 16S rRNA. It has affinity for free ribosomal 30S subunits but not for 70S ribosomes. The protein is Ribosome maturation factor RimM of Nostoc sp. (strain PCC 7120 / SAG 25.82 / UTEX 2576).